The following is a 429-amino-acid chain: 3-phosphoshikimate 1-carboxyvinyltransferase (429 aa).

3-phosphoshikimate is bound by residues Lys23, Ser24, and Arg28. Lys23 is a binding site for phosphoenolpyruvate. Positions 95 and 123 each coordinate phosphoenolpyruvate. 3-phosphoshikimate contacts are provided by Ser168, Gln170, Asp316, and Lys343. Residue Gln170 coordinates phosphoenolpyruvate. Residue Asp316 is the Proton acceptor of the active site. 2 residues coordinate phosphoenolpyruvate: Arg347 and Arg389.

This sequence belongs to the EPSP synthase family. In terms of assembly, monomer.

The protein localises to the cytoplasm. The catalysed reaction is 3-phosphoshikimate + phosphoenolpyruvate = 5-O-(1-carboxyvinyl)-3-phosphoshikimate + phosphate. It participates in metabolic intermediate biosynthesis; chorismate biosynthesis; chorismate from D-erythrose 4-phosphate and phosphoenolpyruvate: step 6/7. In terms of biological role, catalyzes the transfer of the enolpyruvyl moiety of phosphoenolpyruvate (PEP) to the 5-hydroxyl of shikimate-3-phosphate (S3P) to produce enolpyruvyl shikimate-3-phosphate and inorganic phosphate. This chain is 3-phosphoshikimate 1-carboxyvinyltransferase, found in Bacillus thuringiensis (strain Al Hakam).